A 164-amino-acid chain; its full sequence is OV-17 antigen (164 aa).

Residues 1–16 form the signal peptide; sequence MKFVILLTIGLLVVAA. The segment at 24-43 is disordered; the sequence is QQQQQQQQQRDEREIPPFLE.

Belongs to the SXP/RAL-2 family. As to expression, high levels in the hypodermal layer of the adult female.

In Onchocerca volvulus, this protein is OV-17 antigen (OV17).